Here is a 106-residue protein sequence, read N- to C-terminus: Protein U4 (106 aa).

The helical transmembrane segment at 5-25 (FFISIILFVVLLNPSLIINMV) threads the bilayer.

This sequence belongs to the nanovirus U4 protein family.

It is found in the membrane. This is Protein U4 (DNA-U4) from Cicer arietinum (Chickpea).